A 109-amino-acid chain; its full sequence is Class I hydrophobin G (109 aa).

Residues 1–19 (MRLSILSVFSLVGAGMVSA) form the signal peptide. Cystine bridges form between C36-C90, C42-C84, C43-C76, and C91-C105.

This sequence belongs to the fungal hydrophobin family.

The protein localises to the secreted. The protein resides in the cell wall. Functionally, aerial growth, conidiation, and dispersal of filamentous fungi in the environment rely upon a capability of their secreting small amphipathic proteins called hydrophobins (HPBs) with low sequence identity. Class I can self-assemble into an outermost layer of rodlet bundles on aerial cell surfaces, conferring cellular hydrophobicity that supports fungal growth, development and dispersal; whereas Class II form highly ordered films at water-air interfaces through intermolecular interactions but contribute nothing to the rodlet structure. In P.expansum, hydrophobins contribute to germination, tolerance to cold stress and mycotoxins patulin and citrinin production. This Penicillium expansum (Blue mold rot fungus) protein is Class I hydrophobin G.